Consider the following 325-residue polypeptide: Phospho-N-acetylmuramoyl-pentapeptide-transferase (325 aa).

Transmembrane regions (helical) follow at residues 5–25 (VLLL…PIFI), 57–77 (LMIL…LSIF), 81–101 (VLLL…DDFI), 117–137 (LIGQ…MGLS), 146–166 (SLSI…LVGA), 178–198 (GLVA…AWAT), 200–220 (YFEV…FLVF), 227–247 (VFMG…IAIM), 252–272 (ILLI…IIQV), and 304–324 (VTFW…EVWI).

The protein belongs to the glycosyltransferase 4 family. MraY subfamily. Mg(2+) is required as a cofactor.

The protein localises to the cell membrane. The catalysed reaction is UDP-N-acetyl-alpha-D-muramoyl-L-alanyl-gamma-D-glutamyl-meso-2,6-diaminopimeloyl-D-alanyl-D-alanine + di-trans,octa-cis-undecaprenyl phosphate = di-trans,octa-cis-undecaprenyl diphospho-N-acetyl-alpha-D-muramoyl-L-alanyl-D-glutamyl-meso-2,6-diaminopimeloyl-D-alanyl-D-alanine + UMP. It participates in cell wall biogenesis; peptidoglycan biosynthesis. Catalyzes the initial step of the lipid cycle reactions in the biosynthesis of the cell wall peptidoglycan: transfers peptidoglycan precursor phospho-MurNAc-pentapeptide from UDP-MurNAc-pentapeptide onto the lipid carrier undecaprenyl phosphate, yielding undecaprenyl-pyrophosphoryl-MurNAc-pentapeptide, known as lipid I. In Halalkalibacterium halodurans (strain ATCC BAA-125 / DSM 18197 / FERM 7344 / JCM 9153 / C-125) (Bacillus halodurans), this protein is Phospho-N-acetylmuramoyl-pentapeptide-transferase.